The sequence spans 131 residues: Norrin (131 aa).

An N-terminal signal peptide occupies residues 1 to 24; the sequence is MRNHVLAASISMLSLLAIMGDTDS. Disulfide bonds link Cys-37–Cys-94, Cys-53–Cys-108, Cys-63–Cys-124, and Cys-67–Cys-126. A CTCK domain is found at 37-130; the sequence is CMRHHYVDSI…ILSCHCEECS (94 aa).

As to quaternary structure, homodimer; disulfide-linked. Component of a complex, at least composed of TSPAN12, FZD4, LRP5/6 and norrin (NDP). Binds FZD4 with high affinity. Interacts with LRP6 (via Beta-propellers 1 and 2). In terms of tissue distribution, expressed in the outer nuclear, inner nuclear and ganglion cell layers of the retina.

The protein resides in the secreted. Functionally, activates the canonical Wnt signaling pathway through FZD4 and LRP5 coreceptor. Plays a central role in retinal vascularization by acting as a ligand for FZD4 that signals via stabilizing beta-catenin (CTNNB1) and activating LEF/TCF-mediated transcriptional programs. Acts in concert with TSPAN12 to activate FZD4 independently of the Wnt-dependent activation of FZD4, suggesting the existence of a Wnt-independent signaling that also promote accumulation the beta-catenin (CTNNB1). May be involved in a pathway that regulates neural cell differentiation and proliferation. Possible role in neuroectodermal cell-cell interaction. The protein is Norrin (Ndp) of Mus musculus (Mouse).